The primary structure comprises 316 residues: Mycothiol acetyltransferase (316 aa).

N-acetyltransferase domains lie at 16–153 and 156–316; these read REVR…VPAV and VRIR…PAAN. Glu-36 lines the 1D-myo-inositol 2-(L-cysteinylamino)-2-deoxy-alpha-D-glucopyranoside pocket. Acetyl-CoA-binding positions include 83 to 85 and 91 to 96; these read LVV and RRGIGS. Residues Glu-183, Lys-228, and Glu-238 each coordinate 1D-myo-inositol 2-(L-cysteinylamino)-2-deoxy-alpha-D-glucopyranoside. Residues 242-244 and 249-255 contribute to the acetyl-CoA site; these read VGV and QGRGLGQ. 1D-myo-inositol 2-(L-cysteinylamino)-2-deoxy-alpha-D-glucopyranoside is bound at residue Tyr-283. 288-293 serves as a coordination point for acetyl-CoA; the sequence is NVAAVR.

The protein belongs to the acetyltransferase family. MshD subfamily. Monomer.

The enzyme catalyses 1D-myo-inositol 2-(L-cysteinylamino)-2-deoxy-alpha-D-glucopyranoside + acetyl-CoA = mycothiol + CoA + H(+). Functionally, catalyzes the transfer of acetyl from acetyl-CoA to desacetylmycothiol (Cys-GlcN-Ins) to form mycothiol. This chain is Mycothiol acetyltransferase, found in Mycolicibacterium paratuberculosis (strain ATCC BAA-968 / K-10) (Mycobacterium paratuberculosis).